The sequence spans 285 residues: Protein FD (285 aa).

Residues 1-12 (MLSSAKHQRNHR) are compositionally biased toward basic residues. Disordered regions lie at residues 1-59 (MLSS…QKRS), 79-107 (NRHS…NSIF), 115-134 (LNQE…NGDS), 198-236 (SSSF…ARKQ), and 257-285 (KRQQ…TAPF). Over residues 13 to 25 (LSATNKNQTLTKV) the composition is skewed to polar residues. The span at 26–50 (SSISSSSPSSSSSSSSTSSSSPLPS) shows a compositional bias: low complexity. The segment covering 98–107 (HHNQNPNSIF) has biased composition (polar residues). In terms of domain architecture, bZIP spans 214 to 277 (GNRRHKRMIK…AIQQPKKNTL (64 aa)). The segment at 216–235 (RRHKRMIKNRESAARSRARK) is basic motif. Positions 242–263 (LELEVAHLQAENARLKRQQDQL) are leucine-zipper. Positions 272 to 285 (PKKNTLQRSSTAPF) are enriched in polar residues. At Thr-282 the chain carries Phosphothreonine.

This sequence belongs to the bZIP family. As to quaternary structure, self-interacts. Interacts with FT and FDP/BZIP27. Interacts with GRF3 and GRF4, and in a calcium-independent manner, with CPK6 and CPK33. In terms of processing, phosphorylated at Thr-282 in a calcium-dependent manner by CPK6 and CPK33. In terms of tissue distribution, highly expressed in shoot apex.

It is found in the nucleus. Transcription factor required for the transition to flowering promoted by FT. The sequence is that of Protein FD from Arabidopsis thaliana (Mouse-ear cress).